The chain runs to 224 residues: NBPF family member NBPF6-like protein (224 aa).

Positions E159 to L224 constitute an Olduvai domain. The span at Y198–R209 shows a compositional bias: basic and acidic residues. Residues Y198 to L224 are disordered.

This sequence belongs to the NBPF family.

The polypeptide is NBPF family member NBPF6-like protein (Bos taurus (Bovine)).